A 224-amino-acid chain; its full sequence is Cell division protein SepF (224 aa).

The interval 21–78 is disordered; sequence DDYYEDDDRGPAPRGYRRPREDRFEDEGYAPRGYDGHPEDRRRDYDEPPAYRAGLAGG. Positions 54–66 are enriched in basic and acidic residues; that stretch reads YDGHPEDRRRDYD.

Belongs to the SepF family. Homodimer. Interacts with FtsZ.

Its subcellular location is the cytoplasm. Its function is as follows. Cell division protein that is part of the divisome complex and is recruited early to the Z-ring. Probably stimulates Z-ring formation, perhaps through the cross-linking of FtsZ protofilaments. Its function overlaps with FtsA. This chain is Cell division protein SepF, found in Mycolicibacterium gilvum (strain PYR-GCK) (Mycobacterium gilvum (strain PYR-GCK)).